Here is a 424-residue protein sequence, read N- to C-terminus: MNLLIKGGRVIDPSQGIDANLDVLIADGVVLELGQGLAAPEGTPAIDASGLIVTPGLIDMHVHLRDPGLEYKEDIATGSRSAAAGGFTSVACMPNTSPVIDSKAIASYIINKAKSEALVNVFPIGCITKGGKGESLAEMGELKEAGCVAVSDDGKPVCNSELMRRALEYAKGIGIAVISHSEDLALVGEGVMNEGFVSTELGLKGIPWAAEDIAVAREVYLAEFAGAPVHIAHISTVGSARIIRNAKARGVKVTCETAPHYFTLTDEAVRGYETNAKMNPPLRSAADVEAMKAGLADGTIDAIATDHAPHHPDEKDVEFNVALNGIVGLETSLSLSLKLVEEGRLDLNQLVSLMSCTPAKILGLDRGTLKVGAVGDVTIIDPAKEWQVEAAKLESKSKNSPFLGWKMKGRAVYTVVKGQVVYQA.

His61 and His63 together coordinate Zn(2+). Substrate is bound by residues 63-65 (HLR) and Asn95. Zn(2+)-binding residues include Asp153, His180, and His233. A substrate-binding site is contributed by Asn279. Asp306 lines the Zn(2+) pocket. Residue Asp306 is part of the active site. His310 serves as a coordination point for substrate.

It belongs to the metallo-dependent hydrolases superfamily. DHOase family. Class I DHOase subfamily. Requires Zn(2+) as cofactor.

It catalyses the reaction (S)-dihydroorotate + H2O = N-carbamoyl-L-aspartate + H(+). The protein operates within pyrimidine metabolism; UMP biosynthesis via de novo pathway; (S)-dihydroorotate from bicarbonate: step 3/3. Catalyzes the reversible cyclization of carbamoyl aspartate to dihydroorotate. This Citrifermentans bemidjiense (strain ATCC BAA-1014 / DSM 16622 / JCM 12645 / Bem) (Geobacter bemidjiensis) protein is Dihydroorotase.